The following is a 122-amino-acid chain: C-C motif chemokine 9 (122 aa).

The first 21 residues, 1 to 21 (MKPFHTALSFLILTTALGIWA), serve as a signal peptide directing secretion. 3 cysteine pairs are disulfide-bonded: C57–C80, C58–C96, and C67–C107.

The protein belongs to the intercrine beta (chemokine CC) family. Post-translationally, the N-terminal is proteolytically cleaved by proteases associated with inflammatory responses. The processed forms CCL9(29-101), CCL9(30-101) and CCL9(31-101) exhibit increase in CCR1-mediated signaling and chemotaxis assays in vitro. In terms of tissue distribution, expressed mainly in the liver, lung, and the thymus, although some expression has been detected in a wide variety of tissues except brain.

Its subcellular location is the secreted. Monokine with inflammatory, pyrogenic and chemokinetic properties. Circulates at high concentrations in the blood of healthy animals. Binding to a high-affinity receptor activates calcium release in neutrophils. It also inhibits colony formation of bone marrow myeloid immature progenitors. This Mus musculus (Mouse) protein is C-C motif chemokine 9 (Ccl9).